A 144-amino-acid polypeptide reads, in one-letter code: Endoribonuclease YbeY (144 aa).

H104, H108, and H114 together coordinate Zn(2+).

It belongs to the endoribonuclease YbeY family. Zn(2+) is required as a cofactor.

It localises to the cytoplasm. In terms of biological role, single strand-specific metallo-endoribonuclease involved in late-stage 70S ribosome quality control and in maturation of the 3' terminus of the 16S rRNA. This is Endoribonuclease YbeY from Nitratiruptor sp. (strain SB155-2).